The chain runs to 109 residues: Small ribosomal subunit protein bS20 (109 aa).

Belongs to the bacterial ribosomal protein bS20 family.

Functionally, binds directly to 16S ribosomal RNA. This Synechococcus sp. (strain JA-2-3B'a(2-13)) (Cyanobacteria bacterium Yellowstone B-Prime) protein is Small ribosomal subunit protein bS20.